We begin with the raw amino-acid sequence, 189 residues long: Glucose-6-phosphate isomerase (189 aa).

Fe cation-binding residues include H88, H90, E97, and H136.

It belongs to the archaeal-type GPI family. In terms of assembly, homodimer. Fe cation is required as a cofactor.

It is found in the cytoplasm. It catalyses the reaction alpha-D-glucose 6-phosphate = beta-D-fructose 6-phosphate. It functions in the pathway carbohydrate degradation; glycolysis; D-glyceraldehyde 3-phosphate and glycerone phosphate from D-glucose: step 2/4. The chain is Glucose-6-phosphate isomerase (pgiA) from Pyrococcus abyssi (strain GE5 / Orsay).